The primary structure comprises 84 residues: MRKLKKKKEKIGIVISNKMKKTIIISETKRIKHPYYKKVILKKKKYYVHDEHNISNEGDLVKIIETRPLSKQKFWRLLKIVKKK.

Belongs to the universal ribosomal protein uS17 family. As to quaternary structure, part of the 30S ribosomal subunit.

In terms of biological role, one of the primary rRNA binding proteins, it binds specifically to the 5'-end of 16S ribosomal RNA. The protein is Small ribosomal subunit protein uS17 of Karelsulcia muelleri (strain GWSS) (Sulcia muelleri).